Reading from the N-terminus, the 150-residue chain is Large ribosomal subunit protein bL9 (150 aa).

It belongs to the bacterial ribosomal protein bL9 family.

Its function is as follows. Binds to the 23S rRNA. This is Large ribosomal subunit protein bL9 from Streptococcus equi subsp. zooepidemicus (strain MGCS10565).